Here is a 552-residue protein sequence, read N- to C-terminus: 5'-AMP-activated protein kinase catalytic subunit alpha-2 (552 aa).

Residues 16-268 (YVLGDTLGVG…IKDIREHEWF (253 aa)) form the Protein kinase domain. ATP-binding positions include 22-30 (LGVGTFGKV) and Lys-45. Asp-139 functions as the Proton acceptor in the catalytic mechanism. At Thr-172 the chain carries Phosphothreonine; by LKB1 and CaMKK2. Phosphothreonine is present on Thr-258. An AIS region spans residues 291-376 (EAVKEVCEKF…PERMPPLIAD (86 aa)). The residue at position 377 (Ser-377) is a Phosphoserine. A disordered region spans residues 478 to 519 (EQRSGSSTPQRSCSAAGLHRPRSSLDSVTAESHSLSGSLSGS). Over residues 480-490 (RSGSSTPQRSC) the composition is skewed to polar residues. Position 491 is a phosphoserine (Ser-491). Low complexity predominate over residues 509-519 (SHSLSGSLSGS).

The protein belongs to the protein kinase superfamily. CAMK Ser/Thr protein kinase family. SNF1 subfamily. AMPK is a heterotrimer of an alpha catalytic subunit (PRKAA1 or PRKAA2), a beta (PRKAB1 or PRKAB2) and a gamma non-catalytic subunits (PRKAG1, PRKAG2 or PRKAG3). Interacts with FNIP1 and FNIP2. Interacts with DUSP29. Interacts with ARF6. The phosphorylated form at Thr-172 mediated by CamKK2 interacts with ACSS2. Requires Mg(2+) as cofactor. Ubiquitinated. Post-translationally, phosphorylated at Thr-172 by STK11/LKB1 in complex with STE20-related adapter-alpha (STRADA) pseudo kinase and CAB39. Also phosphorylated at Thr-172 by CAMKK2; triggered by a rise in intracellular calcium ions, without detectable changes in the AMP/ATP ratio. CAMKK1 can also phosphorylate Thr-172, but at much lower level. Dephosphorylated by protein phosphatase 2A and 2C (PP2A and PP2C). Phosphorylated by ULK1; leading to negatively regulate AMPK activity and suggesting the existence of a regulatory feedback loop between ULK1 and AMPK. Dephosphorylated by PPM1A and PPM1B at Thr-172 (mediated by STK11/LKB1).

The protein localises to the cytoplasm. It is found in the nucleus. The catalysed reaction is L-seryl-[protein] + ATP = O-phospho-L-seryl-[protein] + ADP + H(+). It catalyses the reaction L-threonyl-[protein] + ATP = O-phospho-L-threonyl-[protein] + ADP + H(+). It carries out the reaction L-seryl-[acetyl-CoA carboxylase] + ATP = O-phospho-L-seryl-[acetyl-CoA carboxylase] + ADP + H(+). The enzyme catalyses L-seryl-[3-hydroxy-3-methylglutaryl-coenzyme A reductase] + ATP = O-phospho-L-seryl-[3-hydroxy-3-methylglutaryl-coenzyme A reductase] + ADP + H(+). Activated by phosphorylation on Thr-172. Binding of AMP to non-catalytic gamma subunit (PRKAG1, PRKAG2 or PRKAG3) results in allosteric activation, inducing phosphorylation on Thr-172. AMP-binding to gamma subunit also sustains activity by preventing dephosphorylation of Thr-172. ADP also stimulates Thr-172 phosphorylation, without stimulating already phosphorylated AMPK. ATP promotes dephosphorylation of Thr-172, rendering the enzyme inactive. Under physiological conditions AMPK mainly exists in its inactive form in complex with ATP, which is much more abundant than AMP. Selectively inhibited by compound C (6-[4-(2-Piperidin-1-yl-ethoxy)-phenyl)]-3-pyridin-4-yl-pyyrazolo[1,5-a] pyrimidine. Activated by resveratrol, a natural polyphenol present in red wine, and S17834, a synthetic polyphenol. Salicylate/aspirin directly activates kinase activity, primarily by inhibiting Thr-172 dephosphorylation. Functionally, catalytic subunit of AMP-activated protein kinase (AMPK), an energy sensor protein kinase that plays a key role in regulating cellular energy metabolism. In response to reduction of intracellular ATP levels, AMPK activates energy-producing pathways and inhibits energy-consuming processes: inhibits protein, carbohydrate and lipid biosynthesis, as well as cell growth and proliferation. AMPK acts via direct phosphorylation of metabolic enzymes, and by longer-term effects via phosphorylation of transcription regulators. Regulates lipid synthesis by phosphorylating and inactivating lipid metabolic enzymes such as ACACA, ACACB, GYS1, HMGCR and LIPE; regulates fatty acid and cholesterol synthesis by phosphorylating acetyl-CoA carboxylase (ACACA and ACACB) and hormone-sensitive lipase (LIPE) enzymes, respectively. Promotes lipolysis of lipid droplets by mediating phosphorylation of isoform 1 of CHKA (CHKalpha2). Regulates insulin-signaling and glycolysis by phosphorylating IRS1, PFKFB2 and PFKFB3. Involved in insulin receptor/INSR internalization. AMPK stimulates glucose uptake in muscle by increasing the translocation of the glucose transporter SLC2A4/GLUT4 to the plasma membrane, possibly by mediating phosphorylation of TBC1D4/AS160. Regulates transcription and chromatin structure by phosphorylating transcription regulators involved in energy metabolism such as CRTC2/TORC2, FOXO3, histone H2B, HDAC5, MEF2C, MLXIPL/ChREBP, EP300, HNF4A, p53/TP53, SREBF1, SREBF2 and PPARGC1A. Acts as a key regulator of glucose homeostasis in liver by phosphorylating CRTC2/TORC2, leading to CRTC2/TORC2 sequestration in the cytoplasm. In response to stress, phosphorylates 'Ser-36' of histone H2B (H2BS36ph), leading to promote transcription. Acts as a key regulator of cell growth and proliferation by phosphorylating FNIP1, TSC2, RPTOR, WDR24 and ATG1/ULK1: in response to nutrient limitation, negatively regulates the mTORC1 complex by phosphorylating RPTOR component of the mTORC1 complex and by phosphorylating and activating TSC2. Also phosphorylates and inhibits GATOR2 subunit WDR24 in response to nutrient limitation, leading to suppress glucose-mediated mTORC1 activation. In response to energetic stress, phosphorylates FNIP1, inactivating the non-canonical mTORC1 signaling, thereby promoting nuclear translocation of TFEB and TFE3, and inducing transcription of lysosomal or autophagy genes. In response to nutrient limitation, promotes autophagy by phosphorylating and activating ATG1/ULK1. In that process also activates WDR45/WIPI4. Phosphorylates CASP6, thereby preventing its autoprocessing and subsequent activation. AMPK also acts as a regulator of circadian rhythm by mediating phosphorylation of CRY1, leading to destabilize it. May regulate the Wnt signaling pathway by phosphorylating CTNNB1, leading to stabilize it. Also acts as a regulator of cellular polarity by remodeling the actin cytoskeleton; probably by indirectly activating myosin. Also phosphorylates CFTR, EEF2K, KLC1, NOS3 and SLC12A1. Plays an important role in the differential regulation of pro-autophagy (composed of PIK3C3, BECN1, PIK3R4 and UVRAG or ATG14) and non-autophagy (composed of PIK3C3, BECN1 and PIK3R4) complexes, in response to glucose starvation. Can inhibit the non-autophagy complex by phosphorylating PIK3C3 and can activate the pro-autophagy complex by phosphorylating BECN1. Upon glucose starvation, promotes ARF6 activation in a kinase-independent manner leading to cell migration. Upon glucose deprivation mediates the phosphorylation of ACSS2 at 'Ser-659', which exposes the nuclear localization signal of ACSS2, required for its interaction with KPNA1 and nuclear translocation. Upon stress, regulates mitochondrial fragmentation through phosphorylation of MTFR1L. The chain is 5'-AMP-activated protein kinase catalytic subunit alpha-2 (PRKAA2) from Sus scrofa (Pig).